Reading from the N-terminus, the 101-residue chain is Small ribosomal subunit protein uS14 (101 aa).

This sequence belongs to the universal ribosomal protein uS14 family. In terms of assembly, part of the 30S ribosomal subunit. Contacts proteins S3 and S10.

Binds 16S rRNA, required for the assembly of 30S particles and may also be responsible for determining the conformation of the 16S rRNA at the A site. The polypeptide is Small ribosomal subunit protein uS14 (Aeromonas hydrophila subsp. hydrophila (strain ATCC 7966 / DSM 30187 / BCRC 13018 / CCUG 14551 / JCM 1027 / KCTC 2358 / NCIMB 9240 / NCTC 8049)).